The chain runs to 366 residues: E3 ubiquitin-protein ligase SINA-like 1 (366 aa).

Positions 1–37 (MVKGTNAEQALAREEASSSRPKRQRVPSIVEEEGENG) are disordered. An RING-type; degenerate zinc finger spans residues 56–92 (CPICCNALTIPIFQCDKGHIACSSCCTNVSNKCPYCS). The tract at residues 106 to 354 (VVEAFIVRCP…KGTYICIRSL (249 aa)) is SBD. The SIAH-type; degenerate zinc-finger motif lies at 109 to 232 (AFIVRCPIVA…LYSHYAANHK (124 aa)). Zn(2+) contacts are provided by Cys114, Cys186, His198, Cys202, Cys209, Cys214, His226, and His231.

Belongs to the SINA (Seven in absentia) family.

The enzyme catalyses S-ubiquitinyl-[E2 ubiquitin-conjugating enzyme]-L-cysteine + [acceptor protein]-L-lysine = [E2 ubiquitin-conjugating enzyme]-L-cysteine + N(6)-ubiquitinyl-[acceptor protein]-L-lysine.. The protein operates within protein modification; protein ubiquitination. E3 ubiquitin-protein ligase that mediates ubiquitination and subsequent proteasomal degradation of target proteins. E3 ubiquitin ligases accept ubiquitin from an E2 ubiquitin-conjugating enzyme in the form of a thioester and then directly transfers the ubiquitin to targeted substrates. It probably triggers the ubiquitin-mediated degradation of different substrates. This is E3 ubiquitin-protein ligase SINA-like 1 from Arabidopsis thaliana (Mouse-ear cress).